We begin with the raw amino-acid sequence, 312 residues long: Porphobilinogen deaminase (312 aa).

Cys-243 carries the post-translational modification S-(dipyrrolylmethanemethyl)cysteine.

The protein belongs to the HMBS family. As to quaternary structure, monomer. It depends on dipyrromethane as a cofactor.

It catalyses the reaction 4 porphobilinogen + H2O = hydroxymethylbilane + 4 NH4(+). The protein operates within porphyrin-containing compound metabolism; protoporphyrin-IX biosynthesis; coproporphyrinogen-III from 5-aminolevulinate: step 2/4. In terms of biological role, tetrapolymerization of the monopyrrole PBG into the hydroxymethylbilane pre-uroporphyrinogen in several discrete steps. The chain is Porphobilinogen deaminase from Vibrio campbellii (strain ATCC BAA-1116).